The following is a 620-amino-acid chain: Glutathione-regulated potassium-efflux system protein KefC (620 aa).

12 consecutive transmembrane segments (helical) span residues 4 to 24, 26 to 46, 54 to 74, 90 to 110, 114 to 134, 149 to 169, 178 to 198, 218 to 238, 270 to 290, 294 to 314, 327 to 347, and 359 to 379; these read HTLL…PIAV, LGLG…PWGL, SILH…GLEL, GALQ…FLGL, VAEL…MQAM, FAVL…IPLL, LGAF…VVVL, VFSA…EEVG, GLLL…GTLV, LRIL…LWLV, WFAV…GAAQ, and ALTL…VLLT. The region spanning 399-518 is the RCK N-terminal domain; the sequence is QPRVIVAGFG…AGVAMPERET (120 aa). The segment at 599-620 is disordered; that stretch reads QGTAEGKHSGEVADEPEVKPSI.

It belongs to the monovalent cation:proton antiporter 2 (CPA2) transporter (TC 2.A.37) family. KefC subfamily. As to quaternary structure, homodimer. Interacts with the regulatory subunit KefF.

Its subcellular location is the cell inner membrane. Pore-forming subunit of a potassium efflux system that confers protection against electrophiles. Catalyzes K(+)/H(+) antiport. In Salmonella paratyphi B (strain ATCC BAA-1250 / SPB7), this protein is Glutathione-regulated potassium-efflux system protein KefC.